Consider the following 486-residue polypeptide: Odorant receptor coreceptor (486 aa).

The Cytoplasmic portion of the chain corresponds to 1–47 (MTTSMQPSKYTGLVADLMPNIRAMKYSGLFMHNFTGGSAFMKKVYSS). Residues 48–68 (VHLVFLLMQFTFILVNMALNA) form a helical membrane-spanning segment. At 69–75 (EEVNELS) the chain is on the extracellular side. The chain crosses the membrane as a helical span at residues 76–96 (GNTITTLFFTHCITKFIYLAV). Topologically, residues 97-135 (NQKNFYRTLNIWNQVNTHPLFAESDARYHSIALAKMRKL) are cytoplasmic. The helical transmembrane segment at 136-156 (FFLVMLTTVASATAWTTITFF) threads the bilayer. At 157 to 191 (GDSVKMVVDHETNSSIPVEIPRLPIKSFYPWNASH) the chain is on the extracellular side. 2 N-linked (GlcNAc...) asparagine glycosylation sites follow: Asn-169 and Asn-188. The helical transmembrane segment at 192 to 212 (GMFYMISFAFQIYYVLFSMIH) threads the bilayer. At 213-351 (SNLCDVMFCS…VERHKHVVRL (139 aa)) the chain is on the cytoplasmic side. The chain crosses the membrane as a helical span at residues 352–372 (VAAIGDTYGAALLLHMLTSTI). Residues 373 to 390 (KLTLLAYQATKINGVNVY) lie on the Extracellular side of the membrane. The chain crosses the membrane as a helical span at residues 391 to 411 (AFTVVGYLGYALAQVFHFCIF). The Cytoplasmic portion of the chain corresponds to 412 to 462 (GNRLIEESSSVMEAAYSCHWYDGSEEAKTFVQIVCQQCQKAMSISGAKFFT). The chain crosses the membrane as a helical span at residues 463–483 (VSLDLFASVLGAVVTYFMVLV). At 484-486 (QLK) the chain is on the extracellular side.

Belongs to the insect chemoreceptor superfamily. Heteromeric odorant receptor channel (TC 1.A.69) family. Orco subfamily. In terms of assembly, heterodimer with conventional odorant receptors (ORs). Complexes exist early in the endomembrane system in olfactory sensory neurons (OSNs), coupling these complexes to the conserved ciliary trafficking pathway. As to expression, expression is restricted to olfactory sensory neurons (OSNs). Coexpressed with Snmp in a lateral-distal population of OSNs. Expressed in the embryonic antennal-maxillary complex, in all 21 OSNs of the larval dorsal organ, in the pupal antennal OSNs, in all 120 adult maxillary palp neurons and in approximately 70-80% of adult antennal OSNs, where expression is highest at the dorsal-medial edge. Localized to OSN cell bodies and to the distal portion of ciliated OSN dendrites.

The protein resides in the cell membrane. In terms of biological role, odorant coreceptor which complexes with conventional odorant receptors (ORs) to form odorant-sensing units, providing sensitive and prolonged odorant signaling and calcium permeability. Orco is a universal and integral part of the functional odorant receptor, involved in the dendritic localization of other olfactory receptors. Expression of Orco alone leads to formation of rapid and transient ion channels not directly responding to odorants, but directly activated by intracellular cAMP or cGMP. Snmp, Or67d and lush act in concert to capture fatty-acid-derived male pheromone 11-cis vaccenyl acetate (cVA) molecules on the surface of Or67d expressing olfactory dendrites and facilitate their transfer to the odorant-receptor Orco complex. The chain is Odorant receptor coreceptor (Orco) from Drosophila melanogaster (Fruit fly).